The following is a 199-amino-acid chain: Recombination protein RecR (199 aa).

Residues 57–72 (CTVCGHITDIDPCAIC) form a C4-type zinc finger. Residues 80–176 (TVVCVVQDSR…RVTRLAHGLP (97 aa)) form the Toprim domain.

It belongs to the RecR family.

In terms of biological role, may play a role in DNA repair. It seems to be involved in an RecBC-independent recombinational process of DNA repair. It may act with RecF and RecO. This Exiguobacterium sp. (strain ATCC BAA-1283 / AT1b) protein is Recombination protein RecR.